Here is a 70-residue protein sequence, read N- to C-terminus: Large ribosomal subunit protein uL29 (70 aa).

This sequence belongs to the universal ribosomal protein uL29 family.

This is Large ribosomal subunit protein uL29 from Clostridium botulinum (strain Eklund 17B / Type B).